Here is a 442-residue protein sequence, read N- to C-terminus: Glutamyl-tRNA reductase (442 aa).

Substrate-binding positions include 50–53, Ser-109, 114–116, and Gln-120; these read TCNR and EPQ. The active-site Nucleophile is the Cys-51. 189 to 194 serves as a coordination point for NADP(+); sequence GAGEMA.

It belongs to the glutamyl-tRNA reductase family. Homodimer.

The enzyme catalyses (S)-4-amino-5-oxopentanoate + tRNA(Glu) + NADP(+) = L-glutamyl-tRNA(Glu) + NADPH + H(+). The protein operates within porphyrin-containing compound metabolism; protoporphyrin-IX biosynthesis; 5-aminolevulinate from L-glutamyl-tRNA(Glu): step 1/2. Its function is as follows. Catalyzes the NADPH-dependent reduction of glutamyl-tRNA(Glu) to glutamate 1-semialdehyde (GSA). This is Glutamyl-tRNA reductase from Nitratidesulfovibrio vulgaris (strain DSM 19637 / Miyazaki F) (Desulfovibrio vulgaris).